Here is a 511-residue protein sequence, read N- to C-terminus: Sphingosine-1-phosphate transporter MFSD2B (511 aa).

The next 9 helical transmembrane spans lie at 108-128 (MPWM…LWFV), 136-156 (VLWY…YHVP), 236-256 (IAAG…FLGV), 280-300 (TMQF…SAAV), 323-343 (NLVL…QWFL), 357-377 (LMIP…AYVV), 379-399 (VASG…LPDV), 415-435 (AIFY…ALGI), and 462-482 (LLIG…LAFY).

Belongs to the major facilitator superfamily.

It is found in the cell membrane. The catalysed reaction is sphing-4-enine 1-phosphate(in) = sphing-4-enine 1-phosphate(out). It carries out the reaction sphinganine 1-phosphate(in) = sphinganine 1-phosphate(out). The enzyme catalyses sphinga-4E,14Z-dienine-1-phosphate(in) = sphinga-4E,14Z-dienine-1-phosphate(out). In terms of biological role, lipid transporter that specifically mediates export of sphingosine-1-phosphate in red blood cells and platelets. Sphingosine-1-phosphate is a signaling sphingolipid and its export from red blood cells into in the plasma is required for red blood cell morphology. Sphingosine-1-phosphate export from platelets is required for platelet aggregation and thrombus formation. In addition to export, also able to mediate S1P import. In Xenopus tropicalis (Western clawed frog), this protein is Sphingosine-1-phosphate transporter MFSD2B.